A 355-amino-acid polypeptide reads, in one-letter code: Ribosomal RNA large subunit methyltransferase M (355 aa).

S-adenosyl-L-methionine contacts are provided by residues Ser-191, 224-227 (APGG), Asp-243, Asp-263, and Asp-279. The Proton acceptor role is filled by Lys-308.

It belongs to the class I-like SAM-binding methyltransferase superfamily. RNA methyltransferase RlmE family. RlmM subfamily. As to quaternary structure, monomer.

The protein resides in the cytoplasm. The catalysed reaction is cytidine(2498) in 23S rRNA + S-adenosyl-L-methionine = 2'-O-methylcytidine(2498) in 23S rRNA + S-adenosyl-L-homocysteine + H(+). Its function is as follows. Catalyzes the 2'-O-methylation at nucleotide C2498 in 23S rRNA. The chain is Ribosomal RNA large subunit methyltransferase M from Stenotrophomonas maltophilia (strain K279a).